An 860-amino-acid polypeptide reads, in one-letter code: Alpha,alpha-trehalose-phosphate synthase [UDP-forming] 6 (860 aa).

Serine 5 carries the phosphoserine modification. The glycosyltransferase stretch occupies residues 53 to 557 (DRIIIVANEL…ARSFLQDLER (505 aa)).

The protein in the N-terminal section; belongs to the glycosyltransferase 20 family. It in the C-terminal section; belongs to the trehalose phosphatase family. As to quaternary structure, binds to the phosphopeptide-binding site of GRF/14-3-3. Phosphorylated. Expressed in seedlings, leaves, stems, flowers, siliques and roots.

It carries out the reaction D-glucose 6-phosphate + UDP-alpha-D-glucose = alpha,alpha-trehalose 6-phosphate + UDP + H(+). Functionally, regulates plant architecture, shape of epidermal pavement cells and branching of trichomes. The polypeptide is Alpha,alpha-trehalose-phosphate synthase [UDP-forming] 6 (Arabidopsis thaliana (Mouse-ear cress)).